The chain runs to 364 residues: Cobalt-precorrin-5B C(1)-methyltransferase (364 aa).

Belongs to the CbiD family.

The catalysed reaction is Co-precorrin-5B + S-adenosyl-L-methionine = Co-precorrin-6A + S-adenosyl-L-homocysteine. The protein operates within cofactor biosynthesis; adenosylcobalamin biosynthesis; cob(II)yrinate a,c-diamide from sirohydrochlorin (anaerobic route): step 6/10. Catalyzes the methylation of C-1 in cobalt-precorrin-5B to form cobalt-precorrin-6A. This is Cobalt-precorrin-5B C(1)-methyltransferase from Thermoplasma acidophilum (strain ATCC 25905 / DSM 1728 / JCM 9062 / NBRC 15155 / AMRC-C165).